The chain runs to 398 residues: MKQLTILGSTGSIGVSSLAVIKANPDKFTVRALSAGYNVKLMLEQCLTFQPTYASMADEASATALRQQLAEYGCKTEVLAGVQAACELAALDGVDQVMAAIVGAAGLLPTLAAIHAGKQVLLANKESLVTCGRLFMDAVEQSDAQLLPIDSEHNAIFQSLPEQIQRQLGYASLSKHGVERIILTGSGGPFRETPVSALADMTPDQACAHPNWSMGRKISVDSATMMNKGLEYIEARWLFNASAEQMEVIIHPQSVIHSMVRYRDGSVLAQLGSPDMRTPIAHAMAYPERVASGAKALDFCQIGALTFLAPDYARYPCLQLAIDACNHGQSATTTLNAANEIAVAAFLQSQIRFTDIAAVNQHVIEQLTLPEPTSVDDVLFIDSWARQVAAQTLTHYVR.

Residues T10, G11, S12, I13, G36, N38, and N124 each contribute to the NADPH site. A 1-deoxy-D-xylulose 5-phosphate-binding site is contributed by K125. NADPH is bound at residue E126. D150 provides a ligand contact to Mn(2+). 1-deoxy-D-xylulose 5-phosphate is bound by residues S151, E152, S186, and H209. E152 provides a ligand contact to Mn(2+). G215 provides a ligand contact to NADPH. The 1-deoxy-D-xylulose 5-phosphate site is built by S222, N227, K228, and E231. Mn(2+) is bound at residue E231.

This sequence belongs to the DXR family. In terms of assembly, homodimer. It depends on Mg(2+) as a cofactor. Mn(2+) serves as cofactor.

The catalysed reaction is 2-C-methyl-D-erythritol 4-phosphate + NADP(+) = 1-deoxy-D-xylulose 5-phosphate + NADPH + H(+). It functions in the pathway isoprenoid biosynthesis; isopentenyl diphosphate biosynthesis via DXP pathway; isopentenyl diphosphate from 1-deoxy-D-xylulose 5-phosphate: step 1/6. Its function is as follows. Catalyzes the NADPH-dependent rearrangement and reduction of 1-deoxy-D-xylulose-5-phosphate (DXP) to 2-C-methyl-D-erythritol 4-phosphate (MEP). In Pectobacterium atrosepticum (strain SCRI 1043 / ATCC BAA-672) (Erwinia carotovora subsp. atroseptica), this protein is 1-deoxy-D-xylulose 5-phosphate reductoisomerase.